Reading from the N-terminus, the 690-residue chain is DNA ligase (690 aa).

NAD(+) is bound by residues aspartate 36–aspartate 40, serine 85–leucine 86, and glutamate 124. Catalysis depends on lysine 126, which acts as the N6-AMP-lysine intermediate. 4 residues coordinate NAD(+): arginine 147, glutamate 184, lysine 308, and lysine 332. Residues cysteine 426, cysteine 429, cysteine 444, and cysteine 449 each coordinate Zn(2+). Residues asparagine 614–leucine 690 form the BRCT domain.

It belongs to the NAD-dependent DNA ligase family. LigA subfamily. Requires Mg(2+) as cofactor. It depends on Mn(2+) as a cofactor.

It carries out the reaction NAD(+) + (deoxyribonucleotide)n-3'-hydroxyl + 5'-phospho-(deoxyribonucleotide)m = (deoxyribonucleotide)n+m + AMP + beta-nicotinamide D-nucleotide.. In terms of biological role, DNA ligase that catalyzes the formation of phosphodiester linkages between 5'-phosphoryl and 3'-hydroxyl groups in double-stranded DNA using NAD as a coenzyme and as the energy source for the reaction. It is essential for DNA replication and repair of damaged DNA. In Prochlorococcus marinus (strain NATL2A), this protein is DNA ligase.